We begin with the raw amino-acid sequence, 186 residues long: Pyridoxal 5'-phosphate synthase subunit PdxT (186 aa).

Gly-47–Ser-49 is an L-glutamine binding site. Residue Cys-76 is the Nucleophile of the active site. Residues Arg-102 and Ile-130–Arg-131 contribute to the L-glutamine site. Residues His-166 and Glu-168 each act as charge relay system in the active site.

Belongs to the glutaminase PdxT/SNO family. As to quaternary structure, in the presence of PdxS, forms a dodecamer of heterodimers. Only shows activity in the heterodimer.

It carries out the reaction aldehydo-D-ribose 5-phosphate + D-glyceraldehyde 3-phosphate + L-glutamine = pyridoxal 5'-phosphate + L-glutamate + phosphate + 3 H2O + H(+). It catalyses the reaction L-glutamine + H2O = L-glutamate + NH4(+). It functions in the pathway cofactor biosynthesis; pyridoxal 5'-phosphate biosynthesis. In terms of biological role, catalyzes the hydrolysis of glutamine to glutamate and ammonia as part of the biosynthesis of pyridoxal 5'-phosphate. The resulting ammonia molecule is channeled to the active site of PdxS. The polypeptide is Pyridoxal 5'-phosphate synthase subunit PdxT (Staphylococcus epidermidis (strain ATCC 35984 / DSM 28319 / BCRC 17069 / CCUG 31568 / BM 3577 / RP62A)).